Here is a 261-residue protein sequence, read N- to C-terminus: tRNA pseudouridine synthase A (261 aa).

Catalysis depends on Asp-51, which acts as the Nucleophile. Tyr-109 contributes to the substrate binding site.

It belongs to the tRNA pseudouridine synthase TruA family. As to quaternary structure, homodimer.

The catalysed reaction is uridine(38/39/40) in tRNA = pseudouridine(38/39/40) in tRNA. Its function is as follows. Formation of pseudouridine at positions 38, 39 and 40 in the anticodon stem and loop of transfer RNAs. This Idiomarina loihiensis (strain ATCC BAA-735 / DSM 15497 / L2-TR) protein is tRNA pseudouridine synthase A.